A 659-amino-acid chain; its full sequence is RNA-binding protein MIP6 (659 aa).

The segment covering Met-1–Cys-27 has biased composition (polar residues). The disordered stretch occupies residues Met-1–Gln-35. RRM domains lie at Asn-111–Lys-189, Thr-199–Ile-267, and Lys-313–Asp-389.

Interacts with MEX67.

It localises to the cytoplasm. The chain is RNA-binding protein MIP6 (MIP6) from Saccharomyces cerevisiae (strain ATCC 204508 / S288c) (Baker's yeast).